The primary structure comprises 156 residues: MRALLQRVSAASVTVDNAVIGEIGPGLLVFVCAMRGDSEAEATQLVQKIARLRIFRDDAGKMNRSVSDTSGAVLVVSQFTLGADTRSGTRPGFSKAAAPDEGMRLYHCFCAKMRETGLTVQTGEFGADMKVSLVNDGPVTLWLDTDDRRNTSAGSG.

Residues G137–P138 carry the Gly-cisPro motif, important for rejection of L-amino acids motif.

This sequence belongs to the DTD family. As to quaternary structure, homodimer.

It is found in the cytoplasm. It catalyses the reaction glycyl-tRNA(Ala) + H2O = tRNA(Ala) + glycine + H(+). The enzyme catalyses a D-aminoacyl-tRNA + H2O = a tRNA + a D-alpha-amino acid + H(+). An aminoacyl-tRNA editing enzyme that deacylates mischarged D-aminoacyl-tRNAs. Also deacylates mischarged glycyl-tRNA(Ala), protecting cells against glycine mischarging by AlaRS. Acts via tRNA-based rather than protein-based catalysis; rejects L-amino acids rather than detecting D-amino acids in the active site. By recycling D-aminoacyl-tRNA to D-amino acids and free tRNA molecules, this enzyme counteracts the toxicity associated with the formation of D-aminoacyl-tRNA entities in vivo and helps enforce protein L-homochirality. The protein is D-aminoacyl-tRNA deacylase of Ruegeria sp. (strain TM1040) (Silicibacter sp.).